Here is an 824-residue protein sequence, read N- to C-terminus: Acyl-homoserine lactone acylase QuiP (824 aa).

The first 26 residues, 1 to 26 (MASPALRHFLPRFGAAAAAASFLSLA), serve as a signal peptide directing secretion. Serine 264 functions as the Nucleophile in the catalytic mechanism.

This sequence belongs to the peptidase S45 family. As to quaternary structure, heterodimer of an alpha subunit and a beta subunit processed from the same precursor.

The protein localises to the periplasm. The catalysed reaction is an N-acyl-L-homoserine lactone + H2O = L-homoserine lactone + a carboxylate. Functionally, catalyzes the deacylation of acyl-homoserine lactone (AHL or acyl-HSL), releasing homoserine lactone (HSL) and the corresponding fatty acid. Possesses a specificity for the degradation of long-chain acyl-HSLs (side chains of seven or more carbons in length). This Pseudomonas syringae pv. syringae (strain B728a) protein is Acyl-homoserine lactone acylase QuiP (quiP).